We begin with the raw amino-acid sequence, 324 residues long: Polyketide biosynthesis acyltransferase homolog PksD (324 aa).

Serine 99 is a catalytic residue.

It is found in the cytoplasm. The protein operates within antibiotic biosynthesis; bacillaene biosynthesis. In terms of biological role, probably involved in some intermediate steps for the synthesis of the antibiotic polyketide bacillaene which is involved in secondary metabolism. This Bacillus subtilis (strain 168) protein is Polyketide biosynthesis acyltransferase homolog PksD (pksD).